The sequence spans 193 residues: Pyridoxal 5'-phosphate synthase subunit PdxT (193 aa).

Residue 52–54 (GES) participates in L-glutamine binding. The active-site Nucleophile is the Cys84. L-glutamine-binding positions include Arg111 and 139 to 140 (IR). Active-site charge relay system residues include His176 and Glu178.

The protein belongs to the glutaminase PdxT/SNO family. In the presence of PdxS, forms a dodecamer of heterodimers. Only shows activity in the heterodimer.

The enzyme catalyses aldehydo-D-ribose 5-phosphate + D-glyceraldehyde 3-phosphate + L-glutamine = pyridoxal 5'-phosphate + L-glutamate + phosphate + 3 H2O + H(+). It carries out the reaction L-glutamine + H2O = L-glutamate + NH4(+). Its pathway is cofactor biosynthesis; pyridoxal 5'-phosphate biosynthesis. Its function is as follows. Catalyzes the hydrolysis of glutamine to glutamate and ammonia as part of the biosynthesis of pyridoxal 5'-phosphate. The resulting ammonia molecule is channeled to the active site of PdxS. This chain is Pyridoxal 5'-phosphate synthase subunit PdxT, found in Pasteurella multocida (strain Pm70).